Reading from the N-terminus, the 145-residue chain is Class I hydrophobin 1 (145 aa).

An N-terminal signal peptide occupies residues M1–A19. 4 disulfide bridges follow: C65-C126, C72-C120, C73-C106, and C127-C140. Residues N80 and N129 are each glycosylated (N-linked (GlcNAc...) asparagine).

This sequence belongs to the fungal hydrophobin family. Self-assembles to form functional amyloid fibrils called rodlets. Self-assembly into fibrillar rodlets occurs spontaneously at hydrophobic:hydrophilic interfaces and the rodlets further associate laterally to form amphipathic monolayers.

The protein localises to the secreted. The protein resides in the cell wall. Its function is as follows. Aerial growth, conidiation, and dispersal of filamentous fungi in the environment rely upon a capability of their secreting small amphipathic proteins called hydrophobins (HPBs) with low sequence identity. Class I can self-assemble into an outermost layer of rodlet bundles on aerial cell surfaces, conferring cellular hydrophobicity that supports fungal growth, development and dispersal; whereas Class II form highly ordered films at water-air interfaces through intermolecular interactions but contribute nothing to the rodlet structure. Hyd1 is a class I hydrophobin that is crucial for the initiation of primordia formation. Plays also important roles in nitrogen regulation and resistance to abiotic stresses. The chain is Class I hydrophobin 1 from Ganoderma lucidum (Ling zhi medicinal fungus).